We begin with the raw amino-acid sequence, 881 residues long: MFWKFDLHTSSHLDTLLEREDLSLPELLDEEDVLQECKVVNRKLLDFLLQPPHLQAMVAWVTQEPPDSGEERLRYKYPSVACEILTSDVPQINDALGADESLLNRLYGFLQSTGSLNPLLASFFSKVMGILINRKTDQLVSFLRKKDDFVDLLLQHIGTSAIMDLLLRLLTCVERPQLRQDVVNWLNEEKIVQRLIEQIHPSKDENQHSNASQSLCDIIRLSREQMIQVQDSPEPDQLLATLEKQETIEQLLSNMFEGEQSQSVIVSGIQVLLTLLEPRRPRSESVTVNSFFSSVDGQLELLAQGALESTVSSVGALHALRPRLSCFHQLLLEPPKLEPLQMTWGMLAPPLGNTRLHVVKLLASALSANDAALTHELLALDVPNTMLDLFFHYVFNNFLHAQVEGCVSTMLSLGPPPDSSPETPIQNPVVKHLLQQCRLVERILTSWEENDRVQCAGGPRKGYMGHLTRVAGALVQNTEKGPNAEQLRQLLKELPSEQQEQWEAFVSGPLAETNKKNMVDLVNTHHLHSSSDDEDDRLKEFNFPEEAVLQQAFMDFQMQRMTSAFIDHFGFNDEEFGEQEESVNAPFDKTANITFSLNADDENPNANLLEICYKDRIQQFDDDEEEEDEEEAQGSGESDGEDGAWQGSQLARGARLGQPPGVRSGGSTDSEDEEEEDEEEEEDEEGIGCAARGGATPLSYPSPGPQPPGPSWTATFDPVPTDAPTSPRVSGEEELHTGPPAPQGPLSVPQGLPTQSLASPPARDALQLRSQDPTPPSAPQEATEGSKVTEPSAPCQALVSIGDLQATFHGIRSAPSSSDSATRDPSTSVPASGAHQPPQTTEGEKSPEPLGLPQSQSAQALTPPPIPNGSAPEGPASPGSQ.

An interaction with PPP6C region spans residues 10-403 (SSHLDTLLER…VFNNFLHAQV (394 aa)). Residue S232 is modified to Phosphoserine. Residue T524 is modified to Phosphothreonine. S529, S530, S531, S635, and S638 each carry phosphoserine. Composition is skewed to acidic residues over residues 621-642 (DDDE…DGED) and 669-686 (DSED…DEEG). A disordered region spans residues 621–881 (DDDEEEEDEE…PEGPASPGSQ (261 aa)). Over residues 700–710 (YPSPGPQPPGP) the composition is skewed to pro residues. A phosphoserine mark is found at S702, S726, and S759. The span at 814–830 (APSSSDSATRDPSTSVP) shows a compositional bias: polar residues. At S846 the chain carries Phosphoserine.

This sequence belongs to the SAPS family. In terms of assembly, protein phosphatase 6 (PP6) holoenzyme is proposed to be a heterotrimeric complex formed of the catalytic subunit, a SAPS domain-containing subunit (PP6R) and an ankyrin repeat-domain containing regulatory subunit (ARS). Interacts with PPP6C and NFKBIE. Interacts with ANKRD28, ANKRD44 and ANKRD52. As to expression, ubiquitous with higher expression in testis.

It localises to the cytoplasm. Its function is as follows. Regulatory subunit of protein phosphatase 6 (PP6). May function as a scaffolding PP6 subunit. Involved in the PP6-mediated dephosphorylation of NFKBIE opposing its degradation in response to TNF-alpha. The sequence is that of Serine/threonine-protein phosphatase 6 regulatory subunit 1 (PPP6R1) from Homo sapiens (Human).